A 481-amino-acid chain; its full sequence is Tryptophan--tRNA ligase, cytoplasmic (481 aa).

The WHEP-TRS domain occupies 12–68 (SPLELFNSIATQGELVRSLKAGNAPKDEIDSAVKMLLSLKMSYKAAMGEEYKAGCPP). Residue K158 is modified to N6-succinyllysine. Residues 168–177 (PSSEAMHLGH) carry the 'HIGH' region motif. Positions 353-357 (KMSAS) match the 'KMSKS' region motif. Position 355 is a phosphoserine (S355).

It belongs to the class-I aminoacyl-tRNA synthetase family. As to quaternary structure, homodimer. Interacts with oxidized form of GAPDH. In terms of processing, proteolytic cleavage generates 2 forms; T1-TrpRS and T2-TrpRS. In terms of tissue distribution, isoform 2 is widely expressed, isoform 1 is found only in embryonic stem cells.

Its subcellular location is the cytoplasm. The catalysed reaction is tRNA(Trp) + L-tryptophan + ATP = L-tryptophyl-tRNA(Trp) + AMP + diphosphate + H(+). Its function is as follows. Catalyzes the attachment of tryptophan to tRNA(Trp) in a two-step reaction: tryptophan is first activated by ATP to form Trp-AMP and then transferred to the acceptor end of the tRNA(Trp). Could also possess an angiostatic activity. In Mus musculus (Mouse), this protein is Tryptophan--tRNA ligase, cytoplasmic.